Reading from the N-terminus, the 392-residue chain is Formate-dependent phosphoribosylglycinamide formyltransferase (392 aa).

N(1)-(5-phospho-beta-D-ribosyl)glycinamide-binding positions include 22–23 (EL) and Glu82. ATP-binding positions include Arg114, Lys155, 160–165 (SSGKGQ), 195–198 (EGVV), and Glu203. The ATP-grasp domain occupies 119–308 (RLAAEELQLP…EFALHVRAFL (190 aa)). Mg(2+) contacts are provided by Glu267 and Glu279. Residues Asp286, Lys355, and 362 to 363 (RR) each bind N(1)-(5-phospho-beta-D-ribosyl)glycinamide.

Belongs to the PurK/PurT family. Homodimer.

It carries out the reaction N(1)-(5-phospho-beta-D-ribosyl)glycinamide + formate + ATP = N(2)-formyl-N(1)-(5-phospho-beta-D-ribosyl)glycinamide + ADP + phosphate + H(+). The protein operates within purine metabolism; IMP biosynthesis via de novo pathway; N(2)-formyl-N(1)-(5-phospho-D-ribosyl)glycinamide from N(1)-(5-phospho-D-ribosyl)glycinamide (formate route): step 1/1. Its function is as follows. Involved in the de novo purine biosynthesis. Catalyzes the transfer of formate to 5-phospho-ribosyl-glycinamide (GAR), producing 5-phospho-ribosyl-N-formylglycinamide (FGAR). Formate is provided by PurU via hydrolysis of 10-formyl-tetrahydrofolate. This Shigella boydii serotype 4 (strain Sb227) protein is Formate-dependent phosphoribosylglycinamide formyltransferase.